Consider the following 443-residue polypeptide: Eukaryotic translation initiation factor 3 subunit E (443 aa).

Residues Leu-249 to Ser-417 form the PCI domain.

Belongs to the eIF-3 subunit E family. Component of the eukaryotic translation initiation factor 3 (eIF-3) complex.

Its subcellular location is the cytoplasm. In terms of biological role, component of the eukaryotic translation initiation factor 3 (eIF-3) complex, which is involved in protein synthesis of a specialized repertoire of mRNAs and, together with other initiation factors, stimulates binding of mRNA and methionyl-tRNAi to the 40S ribosome. The eIF-3 complex specifically targets and initiates translation of a subset of mRNAs involved in cell proliferation. The chain is Eukaryotic translation initiation factor 3 subunit E (int-6) from Neurospora crassa (strain ATCC 24698 / 74-OR23-1A / CBS 708.71 / DSM 1257 / FGSC 987).